The primary structure comprises 108 residues: Thiosulfate sulfurtransferase GlpE (108 aa).

The Rhodanese domain occupies 17–105 (VSQSAILVDV…WLREFPQAIT (89 aa)). Cysteine 65 functions as the Cysteine persulfide intermediate in the catalytic mechanism.

Belongs to the GlpE family.

Its subcellular location is the cytoplasm. It carries out the reaction thiosulfate + hydrogen cyanide = thiocyanate + sulfite + 2 H(+). The catalysed reaction is thiosulfate + [thioredoxin]-dithiol = [thioredoxin]-disulfide + hydrogen sulfide + sulfite + 2 H(+). Transferase that catalyzes the transfer of sulfur from thiosulfate to thiophilic acceptors such as cyanide or dithiols. May function in a CysM-independent thiosulfate assimilation pathway by catalyzing the conversion of thiosulfate to sulfite, which can then be used for L-cysteine biosynthesis. This is Thiosulfate sulfurtransferase GlpE from Proteus mirabilis (strain HI4320).